We begin with the raw amino-acid sequence, 343 residues long: RNA-binding protein 43 (343 aa).

The region spanning 15-90 is the RRM domain; that stretch reads RTVVVSGLPV…PRLTVSHFSE (76 aa).

The polypeptide is RNA-binding protein 43 (Rbm43) (Mus musculus (Mouse)).